The chain runs to 485 residues: Tektin-5 (485 aa).

Coiled coils occupy residues 113 to 185 (SRLT…EVNC), 225 to 251 (QQQM…ALER), 342 to 385 (FNAR…MAKE), and 423 to 443 (DDTL…LQLL).

It belongs to the tektin family. As to quaternary structure, microtubule inner protein component of sperm flagellar doublet microtubules. Interacts with TEKT3. In terms of processing, ubiquitinated, leading to its degradation. Deubiquitinated by USP16, promoting its stability.

Its subcellular location is the cytoplasm. It localises to the cytoskeleton. It is found in the flagellum axoneme. Functionally, sperm-specific microtubule inner protein (MIP) part of the dynein-decorated doublet microtubules (DMTs) in flagellar axoneme. Forms an extensive interaction network in different conformations that reinforces the helix bundle composed by other tektin proteins (TEKT1 to TEKT4) and MIPs to anchor the tektin bundle onto the tubulin wall of A-tubule of the sperm flagellum. This is Tektin-5 (TEKT5) from Macaca fascicularis (Crab-eating macaque).